The primary structure comprises 90 residues: RNA-binding protein Hfq (90 aa).

Residues 9-68 (DPFLNALRRERVPVSIYLVNGIKLQGQVESFDQFVILLKNTVSQMVYKHAISTVVPARPF) form the Sm domain.

This sequence belongs to the Hfq family. Homohexamer.

RNA chaperone that binds small regulatory RNA (sRNAs) and mRNAs to facilitate mRNA translational regulation in response to envelope stress, environmental stress and changes in metabolite concentrations. Also binds with high specificity to tRNAs. This Shewanella baltica (strain OS155 / ATCC BAA-1091) protein is RNA-binding protein Hfq.